Reading from the N-terminus, the 253-residue chain is Ubiquinone/menaquinone biosynthesis C-methyltransferase UbiE (253 aa).

Residues threonine 76, aspartate 97, and 125–126 contribute to the S-adenosyl-L-methionine site; that span reads DA.

This sequence belongs to the class I-like SAM-binding methyltransferase superfamily. MenG/UbiE family.

The catalysed reaction is a 2-demethylmenaquinol + S-adenosyl-L-methionine = a menaquinol + S-adenosyl-L-homocysteine + H(+). It carries out the reaction a 2-methoxy-6-(all-trans-polyprenyl)benzene-1,4-diol + S-adenosyl-L-methionine = a 5-methoxy-2-methyl-3-(all-trans-polyprenyl)benzene-1,4-diol + S-adenosyl-L-homocysteine + H(+). It participates in quinol/quinone metabolism; menaquinone biosynthesis; menaquinol from 1,4-dihydroxy-2-naphthoate: step 2/2. The protein operates within cofactor biosynthesis; ubiquinone biosynthesis. In terms of biological role, methyltransferase required for the conversion of demethylmenaquinol (DMKH2) to menaquinol (MKH2) and the conversion of 2-polyprenyl-6-methoxy-1,4-benzoquinol (DDMQH2) to 2-polyprenyl-3-methyl-6-methoxy-1,4-benzoquinol (DMQH2). This Azotobacter vinelandii (strain DJ / ATCC BAA-1303) protein is Ubiquinone/menaquinone biosynthesis C-methyltransferase UbiE.